The chain runs to 736 residues: Ethylene receptor 2 (736 aa).

3 helical membrane passes run 22–42 (ISDFFIAVAYFSIPIELVYFV), 53–73 (VLVQFGAFIVLCGATHLINLW), and 94–114 (AAVSCATAVMLVHIIPDLLSV). Cys-64 and His-68 together coordinate Cu cation. One can recognise a GAF domain in the interval 157–305 (DRHTILKTTL…VVADQVAVAL (149 aa)). Positions 348 to 585 (VMNHEMRTPM…TAIFIVKLGI (238 aa)) constitute a Histidine kinase domain. Position 351 is a phosphohistidine; by autocatalysis (His-351). Residues 613–730 (KVLVMDDNGF…KMRSVLSGLL (118 aa)) form the Response regulatory domain. Position 661 is a 4-aspartylphosphate (Asp-661).

This sequence belongs to the ethylene receptor family. In terms of assembly, homodimer; disulfide-linked. Requires Cu cation as cofactor. Post-translationally, activation probably requires a transfer of a phosphate group between a His in the transmitter domain and an Asp of the receiver domain. As to expression, leaves, flowers and fruits.

It is found in the endoplasmic reticulum membrane. The catalysed reaction is ATP + protein L-histidine = ADP + protein N-phospho-L-histidine.. In terms of biological role, may act early in the ethylene signal transduction pathway, possibly as an ethylene receptor, or as a regulator of the pathway. This is Ethylene receptor 2 (ETR2) from Solanum lycopersicum (Tomato).